We begin with the raw amino-acid sequence, 282 residues long: 4-diphosphocytidyl-2-C-methyl-D-erythritol kinase (282 aa).

The active site involves lysine 12. 95-105 (PMGGGIGGGSS) provides a ligand contact to ATP. The active site involves aspartate 137.

It belongs to the GHMP kinase family. IspE subfamily.

The enzyme catalyses 4-CDP-2-C-methyl-D-erythritol + ATP = 4-CDP-2-C-methyl-D-erythritol 2-phosphate + ADP + H(+). The protein operates within isoprenoid biosynthesis; isopentenyl diphosphate biosynthesis via DXP pathway; isopentenyl diphosphate from 1-deoxy-D-xylulose 5-phosphate: step 3/6. Functionally, catalyzes the phosphorylation of the position 2 hydroxy group of 4-diphosphocytidyl-2C-methyl-D-erythritol. This Pseudomonas paraeruginosa (strain DSM 24068 / PA7) (Pseudomonas aeruginosa (strain PA7)) protein is 4-diphosphocytidyl-2-C-methyl-D-erythritol kinase.